The following is a 404-amino-acid chain: Serpin-Z2B (404 aa).

The tract at residues 349 to 373 (GTEAAAATACTMKFLCLTLTSPVDF) is RCL.

Belongs to the serpin family.

Functionally, probable serine protease inhibitor. The chain is Serpin-Z2B from Oryza sativa subsp. japonica (Rice).